A 741-amino-acid chain; its full sequence is Phage T7 exclusion protein (741 aa).

The KAP NTPase domain maps to Phe27–Met334.

Responsible for the exclusion of phage T7 by plasmid F. Growth of bacteriophage T7 is inhibited in cells of E.coli that carries the plasmid F. In Escherichia coli (strain K12), this protein is Phage T7 exclusion protein (pifA).